The chain runs to 258 residues: Exu regulon transcriptional regulator (258 aa).

Positions 7-75 (RRLYQQLAAD…KGSGIHVVSN (69 aa)) constitute an HTH gntR-type domain. A DNA-binding region (H-T-H motif) is located at residues 35–54 (ERFIADEKNVSRTVVREAII).

In terms of biological role, repressor for the exu regulon that encode genes involved in hexuronate utilization. It regulates the ExuT, UxaCA and UxuRAB operons. Binds D-tagaturonate and D-fructuronate as inducers. This chain is Exu regulon transcriptional regulator (exuR), found in Escherichia coli O157:H7.